A 100-amino-acid polypeptide reads, in one-letter code: Small ribosomal subunit protein uS14c (100 aa).

It belongs to the universal ribosomal protein uS14 family. As to quaternary structure, part of the 30S ribosomal subunit.

Its subcellular location is the plastid. It localises to the chloroplast. Functionally, binds 16S rRNA, required for the assembly of 30S particles. In Amborella trichopoda, this protein is Small ribosomal subunit protein uS14c.